The following is a 177-amino-acid chain: MSRIGKKPVALPKGVTAEIKGQTIEVKGPKGTRSFTATDDVTLAIEEGAVKVTPRGLSKRARQQWGMTRSMVENLTVGVSEGFKKELEIQGVGYRAQMQGKTLKLALGYSHDVNFETPEGVTISAPKQTEIVVEGIDQQLVGQVAANIREWRRPEPYKGKGIRYKGEVVFRKEGKKK.

It belongs to the universal ribosomal protein uL6 family. As to quaternary structure, part of the 50S ribosomal subunit.

Its function is as follows. This protein binds to the 23S rRNA, and is important in its secondary structure. It is located near the subunit interface in the base of the L7/L12 stalk, and near the tRNA binding site of the peptidyltransferase center. This is Large ribosomal subunit protein uL6 from Paracoccus denitrificans (strain Pd 1222).